The primary structure comprises 365 residues: Patr class I histocompatibility antigen, A-126 alpha chain (365 aa).

Positions 1–24 (MAVMAPRTLVLLLSGALALTQTWA) are cleaved as a signal peptide. The interval 25–114 (GSHSMRYFST…LRGYYNQSED (90 aa)) is alpha-1. Residues 25-308 (GSHSMRYFST…EPSSQPTIPI (284 aa)) are Extracellular-facing. Residue Asn-110 is glycosylated (N-linked (GlcNAc...) asparagine). An alpha-2 region spans residues 115-206 (GSHTIQLMFG…ENGKETLQRT (92 aa)). Intrachain disulfides connect Cys-125/Cys-188 and Cys-227/Cys-283. An alpha-3 region spans residues 207 to 298 (DPPKTHMTHH…GLPKPLTLRW (92 aa)). Positions 209-295 (PKTHMTHHPI…QHEGLPKPLT (87 aa)) constitute an Ig-like C1-type domain. The interval 299 to 308 (EPSSQPTIPI) is connecting peptide. Residues 309–332 (VGIIAGLVLLGAVITGAVVAAVMW) form a helical membrane-spanning segment. Topologically, residues 333–365 (RRKSSDRKGGSYSQAASSDSAQGSDVSLTACKV) are cytoplasmic. The interval 338-365 (DRKGGSYSQAASSDSAQGSDVSLTACKV) is disordered. Low complexity predominate over residues 342-359 (GSYSQAASSDSAQGSDVS). Position 343 is a phosphoserine (Ser-343). Position 344 is a phosphotyrosine (Tyr-344). Ser-345, Ser-349, Ser-352, Ser-356, and Ser-359 each carry phosphoserine.

The protein belongs to the MHC class I family. Heterodimer of an alpha chain and a beta chain (beta-2-microglobulin).

It is found in the membrane. In terms of biological role, involved in the presentation of foreign antigens to the immune system. The polypeptide is Patr class I histocompatibility antigen, A-126 alpha chain (Patr-A) (Pan troglodytes (Chimpanzee)).